A 107-amino-acid polypeptide reads, in one-letter code: uncharacterized protein (107 aa).

Positions Gln86–Val107 are disordered. Residues Glu92 to Val107 show a composition bias toward acidic residues.

This is an uncharacterized protein from Rickettsia prowazekii (strain Madrid E).